The sequence spans 129 residues: Lysozyme C (129 aa).

A C-type lysozyme domain is found at Lys1 to Leu129. Intrachain disulfides connect Cys6–Cys127, Cys30–Cys115, Cys64–Cys80, and Cys76–Cys94. Active-site residues include Glu35 and Asp52.

This sequence belongs to the glycosyl hydrolase 22 family. Monomer.

The protein resides in the secreted. It carries out the reaction Hydrolysis of (1-&gt;4)-beta-linkages between N-acetylmuramic acid and N-acetyl-D-glucosamine residues in a peptidoglycan and between N-acetyl-D-glucosamine residues in chitodextrins.. Lysozymes have primarily a bacteriolytic function; those in tissues and body fluids are associated with the monocyte-macrophage system and enhance the activity of immunoagents. The sequence is that of Lysozyme C (LYZ) from Callipepla californica (California quail).